The primary structure comprises 300 residues: D-alanine--D-alanine ligase (300 aa).

An ATP-grasp domain is found at 99 to 293 (KKILKYANIN…FAELLNSIVK (195 aa)). 126-181 (IEKIGYPVFVKPNSGGSSVATNLVKNKEGIKEAVELALKYDKEVMIENYTKGEEIT) is a binding site for ATP. 3 residues coordinate Mg(2+): Asp-248, Glu-260, and Asn-262.

Belongs to the D-alanine--D-alanine ligase family. The cofactor is Mg(2+). Mn(2+) is required as a cofactor.

Its subcellular location is the cytoplasm. The catalysed reaction is 2 D-alanine + ATP = D-alanyl-D-alanine + ADP + phosphate + H(+). Its pathway is cell wall biogenesis; peptidoglycan biosynthesis. In terms of biological role, cell wall formation. This Clostridium botulinum (strain Loch Maree / Type A3) protein is D-alanine--D-alanine ligase.